Here is a 294-residue protein sequence, read N- to C-terminus: MYKKILIILIIIIIVIISLIYLKNFILYQPHKDHPVKYCKFFHKLSKLTEPENIHHLYLKTPDNILLDTIVIRNTDTNKCIIYFHGNAGNIAMRYNIIKFLFNYASVIVFDYRSFGRSTGSFITMNQQDLSTDAETIWNYVIKNLHYNPNNISLFGESLGCSVAINLAVNISKNFDSKYYPHSLILNSPFYSLSEMVKSIFHKANLSQFGSVLSNLFREYQSDKLIPFMNQHTKIIIAHSHNDEIIPFEQGFKLYQLIANTHTNSKFIIINGSHNNPGLPDEYIYTLADLFNDW.

The helical transmembrane segment at 5-25 (ILIILIIIIIVIISLIYLKNF) threads the bilayer. N-linked (GlcNAc...) asparagine; by host glycans are attached at residues Asn-151, Asn-170, Asn-205, and Asn-271.

The protein resides in the membrane. This is an uncharacterized protein from Acanthamoeba polyphaga (Amoeba).